The following is a 314-amino-acid chain: Pectin lyase (314 aa).

R202 is an active-site residue.

It belongs to the polysaccharide lyase 1 family.

It catalyses the reaction Eliminative cleavage of (1-&gt;4)-alpha-D-galacturonan methyl ester to give oligosaccharides with 4-deoxy-6-O-methyl-alpha-D-galact-4-enuronosyl groups at their non-reducing ends.. The chain is Pectin lyase (pnl) from Pectobacterium carotovorum (Erwinia carotovora).